The chain runs to 374 residues: Chaperone protein DnaJ (374 aa).

The 67-residue stretch at 5–71 (DLYAILGVCR…QKRASYDRFG (67 aa)) folds into the J domain. Residues 132–210 (GVEKQIRIAT…CQGTGRVKDT (79 aa)) form a CR-type zinc finger. Residues Cys-145, Cys-148, Cys-162, Cys-165, Cys-184, Cys-187, Cys-198, and Cys-201 each contribute to the Zn(2+) site. CXXCXGXG motif repeat units lie at residues 145-152 (CGECHGSG), 162-169 (CPTCNGAG), 184-191 (CPTCHGRG), and 198-205 (CNKCQGTG).

This sequence belongs to the DnaJ family. As to quaternary structure, homodimer. It depends on Zn(2+) as a cofactor.

The protein localises to the cytoplasm. Participates actively in the response to hyperosmotic and heat shock by preventing the aggregation of stress-denatured proteins and by disaggregating proteins, also in an autonomous, DnaK-independent fashion. Unfolded proteins bind initially to DnaJ; upon interaction with the DnaJ-bound protein, DnaK hydrolyzes its bound ATP, resulting in the formation of a stable complex. GrpE releases ADP from DnaK; ATP binding to DnaK triggers the release of the substrate protein, thus completing the reaction cycle. Several rounds of ATP-dependent interactions between DnaJ, DnaK and GrpE are required for fully efficient folding. Also involved, together with DnaK and GrpE, in the DNA replication of plasmids through activation of initiation proteins. The sequence is that of Chaperone protein DnaJ from Dichelobacter nodosus (strain VCS1703A).